We begin with the raw amino-acid sequence, 1205 residues long: Transcriptional-regulating factor 1 (1205 aa).

6 disordered regions span residues 201–226 (YQQV…VGQH), 270–317 (YPQP…QRQS), 332–351 (QHLQ…SYHR), 390–500 (PQSH…QTKG), 527–583 (LNGH…PEAE), and 601–629 (PKPS…MSDD). Low complexity-rich tracts occupy residues 291-317 (QQQQ…QRQS) and 332-342 (QHLQEQQQPSM). 3 stretches are compositionally biased toward polar residues: residues 406–417 (KTYSSDRQTPAM), 437–447 (SEMTRVTSTLP), and 487–498 (QSGSPESSSGQT). S490 carries the post-translational modification Phosphoserine. The C2H2-type 1 zinc-finger motif lies at 512-534 (LTCSICLKEFKSLPALNGHMRSH). A compositionally biased stretch (pro residues) spans 551–579 (APPPQPQPQPQPQQPLPPPPPPPPPPQLP). Residues 604–613 (SSQGFTNSVA) are compositionally biased toward polar residues. Residues K639 and K646 each carry the N6-acetyllysine modification. T773 carries the post-translational modification Phosphothreonine. An ELM2 domain is found at 785-876 (PRINIGLRFQ…ATLEMLLLRK (92 aa)). The SANT domain maps to 891 to 942 (AGSDKWTSLERKLFNKALATYSKDFIFVQKMVKSKTVAQCVEYYYTWKKIMR). Over residues 956–975 (DDCMTSEEEEEAEEEEEDPE) the composition is skewed to acidic residues. Disordered stretches follow at residues 956–1016 (DDCM…QQPS) and 1043–1087 (HGGT…GETD). The residue at position 960 (T960) is a Phosphothreonine. S961 carries the phosphoserine modification. Positions 976–990 (EDRKSIKEEESEVAK) are enriched in basic and acidic residues. Residues 1019–1043 (FICEMPNCGAVFSSRQALNGHARIH) form a C2H2-type 2 zinc finger. The segment covering 1072-1086 (SVKSSPSHSTTSGET) has biased composition (low complexity). A C2H2-type 3 zinc finger spans residues 1092–1114 (FPCKECGKVFFKIKSRNAHMKTH).

In terms of assembly, interacts with CREBBP and EP300. Interacts with DNTTIP1 and DNTT. In terms of tissue distribution, highly expressed in kidney, lung and brain. In the brain, expression was seen in the basal ganglia, hippocampus, piriform cortex, cerebral cortex, ventromedial nucleus of the hypothalamus and the dorsal and superior central nuclei of the raphe.

Its subcellular location is the nucleus. Its function is as follows. Binds DNA and activates transcription of CYP11A1. Interaction with CREBBP and EP300 results in a synergistic transcriptional activation of CYP11A1. This chain is Transcriptional-regulating factor 1 (Trerf1), found in Mus musculus (Mouse).